The sequence spans 296 residues: Telomere repeat-binding factor 4 (296 aa).

The HTH myb-type domain occupies 1–62 (MGNQKLKWTA…WRNLSVAPGI (62 aa)). The segment at residues 28–58 (WKNILRDPELAEQLSSRSNIDLKDKWRNLSV) is a DNA-binding region (H-T-H motif). Positions 126–200 (NAPRYDGMIF…STQNFYKMND (75 aa)) constitute an H15 domain. The tract at residues 197-232 (KMNDNSLVQRTPHVARPKESNTKSRQQTNSQGPSIS) is disordered. Over residues 219–232 (KSRQQTNSQGPSIS) the composition is skewed to polar residues. Positions 245-282 (KLVEVENKLDVSKGAAEEIERLMKLAEEADEMLVIARE) form a coiled coil.

Belongs to the histone H1/H5 family. SMH subfamily.

The protein localises to the nucleus. It localises to the chromosome. Functionally, binds preferentially double-stranded telomeric repeats. This is Telomere repeat-binding factor 4 from Arabidopsis thaliana (Mouse-ear cress).